The primary structure comprises 819 residues: Nuclear pore complex protein Nup93 (819 aa).

Position 49 is a phosphothreonine (T49). A phosphoserine mark is found at S52, S66, S72, S75, S80, S430, and S767.

The protein belongs to the nucleoporin interacting component (NIC) family. As to quaternary structure, part of the nuclear pore complex (NPC). Component of the p62 complex, a complex composed of NUP62 and NUP54. Forms a complex with NUP35, NUP155, NUP205 and lamin B; the interaction with NUP35 is direct. Does not interact with TPR. Interacts with SMAD4 and IPO7; translocates SMAD4 to the nucleus through the NPC upon BMP7 stimulation resulting in activation of SMAD4 signaling.

The protein localises to the nucleus membrane. Its subcellular location is the nucleus. The protein resides in the nuclear pore complex. It localises to the nucleus envelope. Its function is as follows. Plays a role in the nuclear pore complex (NPC) assembly and/or maintenance. May anchor nucleoporins, but not NUP153 and TPR, to the NPC. During renal development, regulates podocyte migration and proliferation through SMAD4 signaling. This is Nuclear pore complex protein Nup93 (Nup93) from Rattus norvegicus (Rat).